A 406-amino-acid chain; its full sequence is Cysteine desulfurase (406 aa).

The residue at position 226 (Lys-226) is an N6-(pyridoxal phosphate)lysine. Cys-364 acts as the Cysteine persulfide intermediate in catalysis.

It belongs to the class-V pyridoxal-phosphate-dependent aminotransferase family. Csd subfamily. Homodimer. Interacts with SufE and the SufBCD complex composed of SufB, SufC and SufD. The interaction with SufE is required to mediate the direct transfer of the sulfur atom from the S-sulfanylcysteine. It depends on pyridoxal 5'-phosphate as a cofactor.

The protein localises to the cytoplasm. The catalysed reaction is (sulfur carrier)-H + L-cysteine = (sulfur carrier)-SH + L-alanine. It catalyses the reaction L-selenocysteine + AH2 = hydrogenselenide + L-alanine + A + H(+). The protein operates within cofactor biosynthesis; iron-sulfur cluster biosynthesis. Functionally, cysteine desulfurases mobilize the sulfur from L-cysteine to yield L-alanine, an essential step in sulfur metabolism for biosynthesis of a variety of sulfur-containing biomolecules. Component of the suf operon, which is activated and required under specific conditions such as oxidative stress and iron limitation. Acts as a potent selenocysteine lyase in vitro, that mobilizes selenium from L-selenocysteine. Selenocysteine lyase activity is however unsure in vivo. In Escherichia coli O45:K1 (strain S88 / ExPEC), this protein is Cysteine desulfurase.